Consider the following 269-residue polypeptide: Spermatogenesis-associated serine-rich protein 1 (269 aa).

Positions 1–14 are enriched in basic and acidic residues; it reads MESSKDTQHGDALE. Positions 1–92 are disordered; the sequence is MESSKDTQHG…SKVSLPEIPK (92 aa). Positions 18-38 are enriched in polar residues; the sequence is CLANRTSSRQNKRTSLSSSDG. Thr-54 is modified (phosphothreonine). Residues 67 to 86 show a composition bias toward low complexity; that stretch reads SSSSSSSSSSAQSNRSSKVS. Residues Ser-72, Ser-75, and Ser-82 each carry the phosphoserine modification.

This Mus musculus (Mouse) protein is Spermatogenesis-associated serine-rich protein 1 (Spats1).